The primary structure comprises 198 residues: Carnitine operon protein CaiE (198 aa).

The segment at 179-198 (VEENRPRLKGTTDVKPKSAQ) is disordered. Over residues 180–198 (EENRPRLKGTTDVKPKSAQ) the composition is skewed to basic and acidic residues.

This sequence belongs to the transferase hexapeptide repeat family.

The protein operates within amine and polyamine metabolism; carnitine metabolism. Overproduction of CaiE stimulates the activity of CaiB and CaiD. In Salmonella choleraesuis (strain SC-B67), this protein is Carnitine operon protein CaiE.